We begin with the raw amino-acid sequence, 308 residues long: tRNA dimethylallyltransferase 2 (308 aa).

13-20 (GPTASGKT) serves as a coordination point for ATP. A substrate-binding site is contributed by 15–20 (TASGKT). Positions 38 to 41 (DSRQ) are interaction with substrate tRNA.

It belongs to the IPP transferase family. Monomer. The cofactor is Mg(2+).

The catalysed reaction is adenosine(37) in tRNA + dimethylallyl diphosphate = N(6)-dimethylallyladenosine(37) in tRNA + diphosphate. Catalyzes the transfer of a dimethylallyl group onto the adenine at position 37 in tRNAs that read codons beginning with uridine, leading to the formation of N6-(dimethylallyl)adenosine (i(6)A). In Bacteroides fragilis (strain YCH46), this protein is tRNA dimethylallyltransferase 2.